The sequence spans 434 residues: Attachment protein G3P (434 aa).

The N-terminal stretch at 1–19 (MKRKIIAISLFLYIPLSNA) is a signal peptide. The interval 19–88 (ADNWESITKS…LTFSGIWPDS (70 aa)) is N1. Residues Cys-63 and Cys-98 are joined by a disulfide bond. A G1 (Gly-rich linker) region spans residues 89–107 (QFRLVTGDTCVYNGSPSEK). The segment at 118–137 (EGDMQRSVPDEEPSEQTPEE) is disordered. A compositionally biased stretch (acidic residues) spans 127–137 (DEEPSEQTPEE). The N2 stretch occupies residues 132–200 (EQTPEEICEA…PTGYVPESGE (69 aa)). 2 cysteine pairs are disulfide-bonded: Cys-139–Cys-167 and Cys-177–Cys-184. Disordered stretches follow at residues 191 to 260 (PTGY…TGKS) and 272 to 311 (DASP…SVSD). Over residues 193–206 (GYVPESGESSSSPV) the composition is skewed to low complexity. Over residues 211–257 (TGGTGEGGSDTGGDTGGGDTGGGSTGGDTGGSTGGGSTGGGSTGGST) the composition is skewed to gly residues. The segment at 252 to 434 (STGGSTGKSL…ATSLLRKGEQ (183 aa)) is CT. Positions 293–302 (DNQKKADEQS) are enriched in basic and acidic residues. The helical transmembrane segment at 408–429 (VLSWVMYCLTFWYVFQSATSLL) threads the bilayer.

This sequence belongs to the inovirus G3P protein family. As to quaternary structure, interacts with G6P; this interaction is required for proper integration of G3P and G6P into the virion. Interacts with G8P. Interacts with the tip of the host pilus. Interacts (via N-terminus) with host TolA.

Its subcellular location is the virion. The protein resides in the host membrane. Its function is as follows. Plays essential roles both in the penetration of the viral genome into the bacterial host via pilus retraction and in the extrusion process. During the initial step of infection, G3P mediates adsorption of the phage to its primary receptor, the tip of host I-pilus. Attachment of the phage causes pilus retraction bringing the viral particle into close proximity of the host cell inner membrane. Subsequent interaction with the host entry receptor tolA induces penetration of the viral DNA into the host cytoplasm. In the extrusion process, G3P mediates the release of the membrane-anchored virion from the cell via its C-terminal domain. The sequence is that of Attachment protein G3P (III) from Escherichia coli (Bacteriophage I2-2).